Reading from the N-terminus, the 507-residue chain is RNA-splicing ligase RtcB homolog (507 aa).

D121, C124, H229, H261, and H355 together coordinate Mn(2+). A GMP-binding site is contributed by N228–E232. GMP-binding positions include H355–N356, G404–M407, S411, H430–G433, and K506. The active-site GMP-histidine intermediate is H430.

This sequence belongs to the RtcB family. Catalytic component of the tRNA-splicing ligase complex. Mn(2+) serves as cofactor.

The catalysed reaction is a 3'-end 3'-phospho-ribonucleotide-RNA + a 5'-end dephospho-ribonucleoside-RNA + GTP = a ribonucleotidyl-ribonucleotide-RNA + GMP + diphosphate. It catalyses the reaction a 3'-end 2',3'-cyclophospho-ribonucleotide-RNA + a 5'-end dephospho-ribonucleoside-RNA + GTP + H2O = a ribonucleotidyl-ribonucleotide-RNA + GMP + diphosphate + H(+). Its function is as follows. Catalytic subunit of the tRNA-splicing ligase complex that acts by directly joining spliced tRNA halves to mature-sized tRNAs by incorporating the precursor-derived splice junction phosphate into the mature tRNA as a canonical 3',5'-phosphodiester. May act as an RNA ligase with broad substrate specificity, and may function toward other RNAs. The polypeptide is RNA-splicing ligase RtcB homolog (Theileria parva (East coast fever infection agent)).